A 355-amino-acid chain; its full sequence is Peptide chain release factor 1 (355 aa).

At glutamine 233 the chain carries N5-methylglutamine.

The protein belongs to the prokaryotic/mitochondrial release factor family. In terms of processing, methylated by PrmC. Methylation increases the termination efficiency of RF1.

The protein resides in the cytoplasm. Functionally, peptide chain release factor 1 directs the termination of translation in response to the peptide chain termination codons UAG and UAA. This Bacillus anthracis protein is Peptide chain release factor 1.